A 229-amino-acid chain; its full sequence is Deoxyribose-phosphate aldolase (229 aa).

The active-site Proton donor/acceptor is Asp-96. Catalysis depends on Lys-166, which acts as the Schiff-base intermediate with acetaldehyde. The active-site Proton donor/acceptor is the Lys-195.

It belongs to the DeoC/FbaB aldolase family. DeoC type 1 subfamily.

Its subcellular location is the cytoplasm. It catalyses the reaction 2-deoxy-D-ribose 5-phosphate = D-glyceraldehyde 3-phosphate + acetaldehyde. The protein operates within carbohydrate degradation; 2-deoxy-D-ribose 1-phosphate degradation; D-glyceraldehyde 3-phosphate and acetaldehyde from 2-deoxy-alpha-D-ribose 1-phosphate: step 2/2. Its function is as follows. Catalyzes a reversible aldol reaction between acetaldehyde and D-glyceraldehyde 3-phosphate to generate 2-deoxy-D-ribose 5-phosphate. This Micrococcus luteus (strain ATCC 4698 / DSM 20030 / JCM 1464 / CCM 169 / CCUG 5858 / IAM 1056 / NBRC 3333 / NCIMB 9278 / NCTC 2665 / VKM Ac-2230) (Micrococcus lysodeikticus) protein is Deoxyribose-phosphate aldolase.